The primary structure comprises 373 residues: Pulmonary surfactant-associated protein B (373 aa).

The signal sequence occupies residues 1-22 (MAKSHLLPWLLLLPILCGPGTA). A propeptide spanning residues 23 to 187 (AAITYSLACA…PQTQDLSEQL (165 aa)) is cleaved from the precursor. The Saposin A-type domain occupies 24-64 (AITYSLACAQGPEFWCQSLEQALQCRALGHCLQEVWGHVEA). 3 consecutive Saposin B-type domains span residues 64 to 146 (ADDL…KPRH), 191 to 268 (PIPY…SSED), and 287 to 362 (QDSD…AAPF). Intrachain disulfides connect C68–C142, C71–C136, C99–C111, C195–C264, C198–C258, C222–C233, C291–C358, C294–C352, and C317–C327. A glycan (N-linked (GlcNAc...) asparagine) is linked at N73. A propeptide spanning residues 267–373 (EDSAGPALPA…PLQCVHSPHF (107 aa)) is cleaved from the precursor. N-linked (GlcNAc...) asparagine glycosylation is present at N303.

In terms of assembly, homodimer; disulfide-linked.

The protein resides in the secreted. Its subcellular location is the extracellular space. It is found in the surface film. Its function is as follows. Pulmonary surfactant-associated proteins promote alveolar stability by lowering the surface tension at the air-liquid interface in the peripheral air spaces. SP-B increases the collapse pressure of palmitic acid to nearly 70 millinewtons per meter. The polypeptide is Pulmonary surfactant-associated protein B (SFTPB) (Bos taurus (Bovine)).